The primary structure comprises 280 residues: Clathrin adapter accessory protein LAA2 (280 aa).

The interval 1-26 (MSDRDQIEPVTNALDAESDSSDDFGN) is disordered. Positions 19 to 30 (DSSDDFGNFSDA) match the Ear-binding motif motif.

In terms of assembly, interacts with the clathrin-associated adapter complex AP-1. Interacts with LAA1.

It is found in the cytoplasmic vesicle. The protein localises to the clathrin-coated vesicle. Involved in localization of clathrin-associated adapter complex (AP-1) and subsequent AP-1-mediated clathrin-coated vesicle cargo loading. Directly mediates the interaction between LAA1 and AP-1 which is required for AP-1 localization. In complex with LAA1, cooperates with the small GTPase ARF1 and the phosphatidyl-inositol-4-phosphate (PI4P) synthesis to confer temporal specificity to AP-1 recruitment. This chain is Clathrin adapter accessory protein LAA2, found in Saccharomyces cerevisiae (strain ATCC 204508 / S288c) (Baker's yeast).